Here is a 131-residue protein sequence, read N- to C-terminus: Protein Bouncer (131 aa).

An N-terminal signal peptide occupies residues 1-26 (MGSLRTRQLFHAALLWLCLPLPLLLC). 4 cysteine pairs are disulfide-bonded: Cys31–Cys56, Cys50–Cys74, Cys80–Cys99, and Cys100–Cys105. Residues 31–106 (CYYSPVLEKE…YSCCDWPYCN (76 aa)) enclose the UPAR/Ly6 domain. An N-linked (GlcNAc...) asparagine glycan is attached at Asn65. Residue Asn106 is the site of GPI-anchor amidated asparagine attachment. Residues 107–131 (RAVALEPLTAMLVAAAVVACSFCLT) constitute a propeptide, removed in mature form.

Belongs to the SPACA4/bouncer family. Interacts with spermatocyte complex composed of izumo1, spaca6 and tmem81. As to expression, expressed in oocytes. Not expressed in testis.

Its subcellular location is the cell membrane. Oocyte-expressed fertilization factor that mediates sperm-egg binding and is essential for sperm entry into the egg. Necessary and sufficient to mediate species-specific gamete recognition and fertilization, which is essential for vertebrate species performing external fertilization. External fertilization cannot guarantee that only conspecific sperm reaches the egg by precopulatory mate choice: proteins such as Bouncer can therefore support the selection of conspecific sperm. This Oryzias latipes (Japanese rice fish) protein is Protein Bouncer.